Reading from the N-terminus, the 932-residue chain is Protein translocase subunit SecA (932 aa).

Residues Q87, 105–109 (GEGKT), and D515 each bind ATP. Residues C916, C918, C927, and H928 each contribute to the Zn(2+) site.

Belongs to the SecA family. As to quaternary structure, monomer and homodimer. Part of the essential Sec protein translocation apparatus which comprises SecA, SecYEG and auxiliary proteins SecDF-YajC and YidC. It depends on Zn(2+) as a cofactor.

The protein resides in the cell inner membrane. It localises to the cytoplasm. The catalysed reaction is ATP + H2O + cellular proteinSide 1 = ADP + phosphate + cellular proteinSide 2.. Its function is as follows. Part of the Sec protein translocase complex. Interacts with the SecYEG preprotein conducting channel. Has a central role in coupling the hydrolysis of ATP to the transfer of proteins into and across the cell membrane, serving both as a receptor for the preprotein-SecB complex and as an ATP-driven molecular motor driving the stepwise translocation of polypeptide chains across the membrane. The protein is Protein translocase subunit SecA of Burkholderia orbicola (strain MC0-3).